The chain runs to 62 residues: ATP synthase subunit epsilon, mitochondrial (62 aa).

The residue at position 52 (threonine 52) is a Phosphothreonine.

The protein belongs to the eukaryotic ATPase epsilon family. As to quaternary structure, F-type ATPases have 2 components, CF(1) - the catalytic core - and CF(0) - the membrane proton channel. CF(1) has five subunits: alpha(3), beta(3), gamma(1), delta(1), epsilon(1). CF(0) has three main subunits: a, b and c.

The protein localises to the mitochondrion. The protein resides in the mitochondrion inner membrane. Its function is as follows. Mitochondrial membrane ATP synthase (F(1)F(0) ATP synthase or Complex V) produces ATP from ADP in the presence of a proton gradient across the membrane which is generated by electron transport complexes of the respiratory chain. F-type ATPases consist of two structural domains, F(1) - containing the extramembraneous catalytic core, and F(0) - containing the membrane proton channel, linked together by a central stalk and a peripheral stalk. During catalysis, ATP synthesis in the catalytic domain of F(1) is coupled via a rotary mechanism of the central stalk subunits to proton translocation. Part of the complex F(1) domain and of the central stalk which is part of the complex rotary element. Rotation of the central stalk against the surrounding alpha(3)beta(3) subunits leads to hydrolysis of ATP in three separate catalytic sites on the beta subunits. This Saccharomyces cerevisiae (strain ATCC 204508 / S288c) (Baker's yeast) protein is ATP synthase subunit epsilon, mitochondrial (ATP15).